The chain runs to 561 residues: Carbohydrate sulfotransferase 15 (561 aa).

The Cytoplasmic portion of the chain corresponds to Met-1–Cys-80. A helical; Signal-anchor for type II membrane protein transmembrane segment spans residues Ser-81–Ala-101. Topologically, residues His-102–Thr-561 are lumenal. Residue Lys-263 to Thr-267 participates in 3'-phosphoadenylyl sulfate binding. N-linked (GlcNAc...) asparagine glycosylation occurs at Asn-364. 3'-phosphoadenylyl sulfate contacts are provided by Arg-392 and Ser-400.

The protein belongs to the sulfotransferase 1 family. Homodimer; disulfide-linked (Potential). The relevance of homodimerization is however unsure. May interact with phosphorylated proteins in resting B-cells, including HCK. The cofactor is a divalent metal cation. It depends on glutathione as a cofactor. Glycosylated.

The protein resides in the golgi apparatus membrane. The catalysed reaction is dermatan 4'-sulfate + n 3'-phosphoadenylyl sulfate = dermatan 4',6'-bissulfate + n adenosine 3',5'-bisphosphate + n H(+). It catalyses the reaction chondroitin 4'-sulfate + n 3'-phosphoadenylyl sulfate = chondroitin 4',6'-bissulfate + n adenosine 3',5'-bisphosphate + n H(+). Its activity is regulated as follows. Inhibited by phenyl beta-GalNAc(4,6-SO(4)). Sulfotransferase that transfers sulfate from 3'-phosphoadenosine 5'-phosphosulfate (PAPS) to the C-6 hydroxyl group of the GalNAc 4-sulfate residue of chondroitin sulfate A and forms chondroitin sulfate E containing GlcA-GalNAc(4,6-SO(4)) repeating units. It also transfers sulfate to a unique non-reducing terminal sequence, GalNAc(4SO4)-GlcA(2SO4)-GalNAc(6SO4), to yield a highly sulfated structure similar to the structure found in thrombomodulin chondroitin sulfate. May also act as a B-cell receptor involved in BCR ligation-mediated early activation that mediate regulatory signals key to B-cell development and/or regulation of B-cell-specific RAG expression; however such results are unclear in vivo. This chain is Carbohydrate sulfotransferase 15 (Chst15), found in Mus musculus (Mouse).